A 78-amino-acid polypeptide reads, in one-letter code: Omega-conotoxin-like 2 (78 aa).

Residues 1–22 (MKLTCVVIVAVLLLTACQLITA) form the signal peptide. The propeptide occupies 23–42 (DDSRGTQKHRSLRSTTKVSK). 3 disulfides stabilise this stretch: Cys46–Cys62, Cys53–Cys65, and Cys61–Cys72.

This sequence belongs to the conotoxin O1 superfamily. Expressed by the venom duct.

The protein resides in the secreted. Its function is as follows. Omega-conotoxins act at presynaptic membranes, they bind and block voltage-gated calcium channels (Cav). The sequence is that of Omega-conotoxin-like 2 from Conus striatus (Striated cone).